The sequence spans 290 residues: Membrane protein insertase YidC 2 (290 aa).

The first 19 residues, 1-19 (MKKKALLPLFLGIMIFLAG), serve as a signal peptide directing secretion. Cys20 is lipidated: N-palmitoyl cysteine. A lipid anchor (S-diacylglycerol cysteine) is attached at Cys20. 5 consecutive transmembrane segments (helical) span residues 56 to 76 (FGLA…PFML), 134 to 154 (MLGC…YFVL), 176 to 196 (PDIW…VVSS), 211 to 231 (MVIS…ALGL), and 232 to 252 (YWSV…IYYS). The interval 266–290 (YEREHNPSSKKKGKNTQVVSKKNKK) is disordered. The segment covering 280-290 (NTQVVSKKNKK) has biased composition (polar residues).

Belongs to the OXA1/ALB3/YidC family. Type 2 subfamily.

It localises to the cell membrane. Its function is as follows. Required for the insertion and/or proper folding and/or complex formation of integral membrane proteins into the membrane. Involved in integration of membrane proteins that insert both dependently and independently of the Sec translocase complex, as well as at least some lipoproteins. This Staphylococcus epidermidis (strain ATCC 35984 / DSM 28319 / BCRC 17069 / CCUG 31568 / BM 3577 / RP62A) protein is Membrane protein insertase YidC 2.